A 183-amino-acid polypeptide reads, in one-letter code: Ribosome-recycling factor (183 aa).

Residues 134-156 (DANDELKKHQSEMSQDEVKGHQD) form a disordered region.

It belongs to the RRF family.

It is found in the cytoplasm. In terms of biological role, responsible for the release of ribosomes from messenger RNA at the termination of protein biosynthesis. May increase the efficiency of translation by recycling ribosomes from one round of translation to another. The chain is Ribosome-recycling factor from Leptospira biflexa serovar Patoc (strain Patoc 1 / Ames).